We begin with the raw amino-acid sequence, 762 residues long: MSDAPKRSLNPTLMMNNNNTPPKPLEESLDLKEFIALFKTFFAKERDTIALENDLKQTFTYLNEVDAIGLPTPKSVKESDLIIIKLTKLGTLHLDEIFEIVKRLHYIVVLQNAFKTFTHLKFHERLNAIVLPPFFNDLIALFDDEGKIKQGANATLDALNESLNRLKKESVKIIHHYARSKELAPYLVDTQSHLKHGYECLLLKSGFSGAIKGVVLERSANGYFYLLPESAQKIAQKIAQIGNEIDCCIVEMCQTLSHSLQKHLLFLKFLFKEFDFLDSLQARLNFAKAYNLEFVMPSFTQKKMILENFSHPILKEPKPLNLKFEKSMLAVTGVNAGGKTMLLKSLLSAAFLSKHLIPMKINAHHSIIPYFKEIHAIINDPQNSANNISTFAGRMKQFSALLSKENMLLGVDEIELGTDADEASSLYKTLLEKLLKQNNQIIITTHHKRLSVLMAENKEVELLAALYDEEKERPTYTFLKGVIGKSYAFETALRYGVPHFLIEKAKTFYGEDKEKLNVLIENSSALERELKQKNEHLENALKEQEYLKNAWLLEMEKQKEIFHNKKLELEKSYQQALNILKSEVASKDTSSMHKEIHKASEILSKHKTNQEIPQIITNFQANEKARYKNESVLIVQILDKGYYWIETELGMRLKAHGSLLKKIQKPPKNKFKPPKTTIPKPKEASLRLDLRGQRSEEALDLLDAFLNDALLGGFEEVLICHGKGSGILEKFVKEFLKNHPKVVSFSDAPINLGGSGVKIVKL.

Positions 1-22 (MSDAPKRSLNPTLMMNNNNTPP) are disordered. Over residues 9–20 (LNPTLMMNNNNT) the composition is skewed to low complexity. ATP is bound at residue 333–340 (GVNAGGKT). The Smr domain occupies 688–762 (LDLRGQRSEE…GGSGVKIVKL (75 aa)).

The protein belongs to the DNA mismatch repair MutS family. MutS2 subfamily. Homodimer. Binds to stalled ribosomes, contacting rRNA.

Its activity is regulated as follows. ATPase activity is stimulated by DNA. In terms of biological role, endonuclease that is involved in the suppression of homologous recombination and may thus have a key role in the control of bacterial genetic diversity. Also involved in repairing oxidative DNA damage. Has ATPase activity. Binds DNA. Functionally, endonuclease that is involved in the suppression of homologous recombination and thus may have a key role in the control of bacterial genetic diversity. Its function is as follows. Acts as a ribosome collision sensor, splitting the ribosome into its 2 subunits. Detects stalled/collided 70S ribosomes which it binds and splits by an ATP-hydrolysis driven conformational change. Acts upstream of the ribosome quality control system (RQC), a ribosome-associated complex that mediates the extraction of incompletely synthesized nascent chains from stalled ribosomes and their subsequent degradation. Probably generates substrates for RQC. In Helicobacter pylori (strain ATCC 700392 / 26695) (Campylobacter pylori), this protein is Endonuclease MutS2.